We begin with the raw amino-acid sequence, 103 residues long: uncharacterized protein (103 aa).

2 stretches are compositionally biased toward polar residues: residues 1–10 (MSNSCSTSSY) and 18–28 (TRSGSNVNRNY). The segment at 1-28 (MSNSCSTSSYPIRRKTPTRSGSNVNRNY) is disordered.

This is an uncharacterized protein from Acanthamoeba polyphaga mimivirus (APMV).